A 1733-amino-acid polypeptide reads, in one-letter code: Protein NETWORKED 1D (1733 aa).

Residues 12 to 92 (YSWWWDSHIS…ERYDHATGVI (81 aa)) enclose the NAB domain. 4 coiled-coil regions span residues 195–816 (KEIN…RESS), 897–931 (LIAE…QIDS), 960–1043 (DENS…QKLI), and 1196–1386 (ARSA…NDLM). Residues 1456–1476 (LKTSSARRSRRRNGSLRKQNH) form a disordered region. Residues 1460 to 1470 (SARRSRRRNGS) are compositionally biased toward basic residues. Coiled coils occupy residues 1553–1627 (ANKR…KVQN) and 1653–1686 (SEQA…DRED). The interval 1628 to 1656 (GFERSDGSKSSMDLDENESSRRRRISEQA) is disordered.

The protein belongs to the NET family.

In terms of biological role, plant-specific actin binding protein. May be part of a membrane-cytoskeletal adapter complex. The sequence is that of Protein NETWORKED 1D from Arabidopsis thaliana (Mouse-ear cress).